We begin with the raw amino-acid sequence, 207 residues long: High frequency lysogenization protein HflD homolog (207 aa).

This sequence belongs to the HflD family.

It localises to the cytoplasm. The protein localises to the cell inner membrane. The polypeptide is High frequency lysogenization protein HflD homolog (Tolumonas auensis (strain DSM 9187 / NBRC 110442 / TA 4)).